A 74-amino-acid chain; its full sequence is UPF0248 protein MK0350 (74 aa).

The protein belongs to the UPF0248 family.

This chain is UPF0248 protein MK0350, found in Methanopyrus kandleri (strain AV19 / DSM 6324 / JCM 9639 / NBRC 100938).